Here is a 40-residue protein sequence, read N- to C-terminus: Photosystem II reaction center protein J (40 aa).

A helical transmembrane segment spans residues 8 to 28 (IPLWVIGTVAGIPVIGLIGIF).

It belongs to the PsbJ family. PSII is composed of 1 copy each of membrane proteins PsbA, PsbB, PsbC, PsbD, PsbE, PsbF, PsbH, PsbI, PsbJ, PsbK, PsbL, PsbM, PsbT, PsbX, PsbY, PsbZ, Psb30/Ycf12, at least 3 peripheral proteins of the oxygen-evolving complex and a large number of cofactors. It forms dimeric complexes.

The protein localises to the plastid. It is found in the chloroplast thylakoid membrane. Its function is as follows. One of the components of the core complex of photosystem II (PSII). PSII is a light-driven water:plastoquinone oxidoreductase that uses light energy to abstract electrons from H(2)O, generating O(2) and a proton gradient subsequently used for ATP formation. It consists of a core antenna complex that captures photons, and an electron transfer chain that converts photonic excitation into a charge separation. The sequence is that of Photosystem II reaction center protein J from Nasturtium officinale (Watercress).